Consider the following 399-residue polypeptide: Elongation factor Tu (399 aa).

The region spanning 10–207 (KTHMNVGTIG…AVDSYFPDPV (198 aa)) is the tr-type G domain. The interval 19-26 (GHIDHGKT) is G1. 19–26 (GHIDHGKT) is a binding site for GTP. Threonine 26 contributes to the Mg(2+) binding site. The tract at residues 60 to 64 (GITIN) is G2. The tract at residues 81–84 (DCPG) is G3. Residues 81–85 (DCPGH) and 136–139 (NKVD) each bind GTP. The segment at 136–139 (NKVD) is G4. The segment at 174–176 (SAL) is G5.

The protein belongs to the TRAFAC class translation factor GTPase superfamily. Classic translation factor GTPase family. EF-Tu/EF-1A subfamily. As to quaternary structure, monomer.

Its subcellular location is the cytoplasm. It carries out the reaction GTP + H2O = GDP + phosphate + H(+). GTP hydrolase that promotes the GTP-dependent binding of aminoacyl-tRNA to the A-site of ribosomes during protein biosynthesis. This chain is Elongation factor Tu, found in Petrotoga mobilis (strain DSM 10674 / SJ95).